The chain runs to 118 residues: UPF0102 protein DICTH_1420 (118 aa).

This sequence belongs to the UPF0102 family.

The protein is UPF0102 protein DICTH_1420 of Dictyoglomus thermophilum (strain ATCC 35947 / DSM 3960 / H-6-12).